We begin with the raw amino-acid sequence, 170 residues long: Protein HemX (170 aa).

The span at 1–17 shows a compositional bias: polar residues; it reads MTEQKNTNENDLQNGTS. Residues 1–24 form a disordered region; the sequence is MTEQKNTNENDLQNGTSKADDDIR. Residues 37-57 form a helical membrane-spanning segment; it reads GLIGSAVAILVILAIGGGLYY.

It is found in the cell membrane. The chain is Protein HemX from Proteus mirabilis.